The chain runs to 466 residues: ATP synthase subunit beta (466 aa).

153–160 provides a ligand contact to ATP; that stretch reads GGAGVGKT.

Belongs to the ATPase alpha/beta chains family. As to quaternary structure, F-type ATPases have 2 components, CF(1) - the catalytic core - and CF(0) - the membrane proton channel. CF(1) has five subunits: alpha(3), beta(3), gamma(1), delta(1), epsilon(1). CF(0) has three main subunits: a(1), b(2) and c(9-12). The alpha and beta chains form an alternating ring which encloses part of the gamma chain. CF(1) is attached to CF(0) by a central stalk formed by the gamma and epsilon chains, while a peripheral stalk is formed by the delta and b chains.

It is found in the cell membrane. The catalysed reaction is ATP + H2O + 4 H(+)(in) = ADP + phosphate + 5 H(+)(out). In terms of biological role, produces ATP from ADP in the presence of a proton gradient across the membrane. The catalytic sites are hosted primarily by the beta subunits. This is ATP synthase subunit beta from Oenococcus oeni (strain ATCC BAA-331 / PSU-1).